The sequence spans 192 residues: uncharacterized protein (192 aa).

Residues 29–160 (QRQAAVLVPI…PLDIERKQQR (132 aa)) enclose the Nudix hydrolase domain. A Nudix box motif is present at residues 67–89 (GAADKTDRSIIETALREAQEEVA). The Mg(2+) site is built by glutamate 83 and glutamate 87.

The protein belongs to the Nudix hydrolase family. PCD1 subfamily. It depends on Mn(2+) as a cofactor. Mg(2+) is required as a cofactor.

Probably mediates the hydrolysis of some nucleoside diphosphate derivatives. This is an uncharacterized protein from Pectobacterium atrosepticum (strain SCRI 1043 / ATCC BAA-672) (Erwinia carotovora subsp. atroseptica).